Consider the following 273-residue polypeptide: Undecaprenyl-diphosphatase (273 aa).

The next 8 membrane-spanning stretches (helical) occupy residues 3–23, 47–67, 90–110, 120–140, 148–168, 186–206, 217–237, and 249–269; these read IILW…EFLP, ALDA…WQDI, LLLG…LLKL, IIAT…QWGS, IGIL…LPGA, PTAA…ATLV, LLIP…LAIA, and WVFI…IALG.

Belongs to the UppP family.

It is found in the cell inner membrane. The enzyme catalyses di-trans,octa-cis-undecaprenyl diphosphate + H2O = di-trans,octa-cis-undecaprenyl phosphate + phosphate + H(+). In terms of biological role, catalyzes the dephosphorylation of undecaprenyl diphosphate (UPP). Confers resistance to bacitracin. The sequence is that of Undecaprenyl-diphosphatase from Thermosynechococcus vestitus (strain NIES-2133 / IAM M-273 / BP-1).